The chain runs to 45 residues: Large ribosomal subunit protein bL34 (45 aa).

This sequence belongs to the bacterial ribosomal protein bL34 family.

The sequence is that of Large ribosomal subunit protein bL34 from Salinispora tropica (strain ATCC BAA-916 / DSM 44818 / JCM 13857 / NBRC 105044 / CNB-440).